We begin with the raw amino-acid sequence, 811 residues long: Receptor-like protein 46 (811 aa).

Residues 1–21 form the signal peptide; the sequence is MSKQCLLSCFLFFCFFIPQLS. The Extracellular portion of the chain corresponds to 22 to 782; the sequence is FSCPQDQRQS…EEEDKEEEET (761 aa). N-linked (GlcNAc...) asparagine glycans are attached at residues Asn46, Asn71, Asn128, and Asn143. LRR repeat units lie at residues 104–128, 129–153, 155–177, 178–201, 203–225, 226–249, 251–273, 275–298, 299–322, 324–348, 349–369, 370–395, 397–419, 421–442, 443–466, 468–488, 490–510, 511–534, 536–560, 561–583, 643–665, 666–688, 690–713, and 714–738; these read INSLVGLDVSFNNIQGEIPGYAFVN, LTSLISLDMCCNRFNGSIPHELFSL, NLQRLDLSRNVIGGTLSGDIKEL, KNLQELILDENLIGGAIPSEIGSL, ELLTLTLRQNMFNSSIPSSVSRL, TKLKTIDLQNNFLSSKIPDDIGNL, NLSTLSLSMNKLSGGIPSSIHNL, NLETLQLENNNGLSGEIPAAWLFG, LQKLKVLRLEGNNKLQWNNNGYVF, QFKLTHLSLRSCGLEGNIPDWLKNQ, TALVYLDLSINRLEGRFPKWL, ADLKIRNITLSDNRLTGSLPPNLFQR, SLYYLVLSRNNFSGQIPDTIGES, VMVLMLSENNFSGSVPKSITKI, PFLKLLDLSKNRLSGEFPRFRPES, LEWLDISSNEFSGDVPAYFGG, TSMLLMSQNNFSGEFPQNFRN, LSYLIRLDLHDNKISGTVASLISQ, SSSVEVLSLRNNSLKGSIPEGISNL, TSLKVLDLSENNLDGYLPSSLGN, LYTLLDLSKNKLHGEIPTSLGNL, KSLKVLNLSNNEFSGLIPQSFGD, EKVESLDLSHNNLTGEIPKTLSKL, and SELNTLDLRNNKLKGRIPESPQLDR. A glycan (N-linked (GlcNAc...) asparagine) is linked at Asn215. The N-linked (GlcNAc...) asparagine glycan is linked to Asn251. Asn347 carries an N-linked (GlcNAc...) asparagine glycan. 3 N-linked (GlcNAc...) asparagine glycosylation sites follow: Asn376, Asn407, and Asn430. N-linked (GlcNAc...) asparagine glycosylation is found at Asn499 and Asn510. Asn546, Asn559, and Asn583 each carry an N-linked (GlcNAc...) asparagine glycan. Residues Asn672 and Asn701 are each glycosylated (N-linked (GlcNAc...) asparagine). An N-linked (GlcNAc...) asparagine glycan is attached at Asn747. Residues 783-803 form a helical membrane-spanning segment; that stretch reads IFSWNAAAIGCSCGFLIAVVF. Residues 804–811 lie on the Cytoplasmic side of the membrane; that stretch reads MSYNELWK.

The protein belongs to the RLP family.

It is found in the cell membrane. This Arabidopsis thaliana (Mouse-ear cress) protein is Receptor-like protein 46.